Here is a 221-residue protein sequence, read N- to C-terminus: Small ribosomal subunit protein eS8 (221 aa).

Disordered stretches follow at residues 1 to 41 and 128 to 169; these read MGIS…LSSN and TPAA…TLDP. Residues 8 to 26 show a composition bias toward basic residues; the sequence is MHKRRATGGKQKAWRKKRK. Residues 146-169 are compositionally biased toward basic and acidic residues; that stretch reads EETKKSNHVTRKLEKRKEGRTLDP.

It belongs to the eukaryotic ribosomal protein eS8 family.

The protein is Small ribosomal subunit protein eS8 (RPS8) of Zea mays (Maize).